The primary structure comprises 89 residues: Myrmicitoxin(1)-Pr2c (89 aa).

A signal peptide spans 1–23 (MEIPKLLYIAVIAIGLSGSLTCA). Residues 24 to 61 (TPLANPWADPEAEANPKAKATAEATAEAIAEALAEPEP) constitute a propeptide that is removed on maturation. N88 carries the post-translational modification Asparagine amide.

This sequence belongs to the formicidae venom clade 1 family. As to expression, expressed by the venom gland.

The protein localises to the secreted. Functionally, vertebrate-selective toxin that causes pain by targeting voltage-gated sodium channels. The protein is Myrmicitoxin(1)-Pr2c of Pogonomyrmex rugosus (Desert harvester ant).